Consider the following 569-residue polypeptide: Vacuolar protein sorting-associated protein 53 B (569 aa).

Coiled-coil stretches lie at residues Thr-53–Ile-90, Gln-125–Glu-145, and Lys-295–Glu-316.

This sequence belongs to the VPS53 family. As to quaternary structure, component of the Golgi-associated retrograde protein (GARP) complex.

The protein localises to the cytoplasm. Its subcellular location is the golgi apparatus. It localises to the trans-Golgi network membrane. It is found in the endosome membrane. Involved in retrograde transport from early and late endosomes to late Golgi, leading to the membrane fusion between late Golgi and endosomal vesicles. The protein is Vacuolar protein sorting-associated protein 53 B of Arabidopsis thaliana (Mouse-ear cress).